Here is a 271-residue protein sequence, read N- to C-terminus: Phosphatidylglycerol--prolipoprotein diacylglyceryl transferase (271 aa).

The next 7 membrane-spanning stretches (helical) occupy residues 21-41 (ISVR…MWLA), 60-80 (LLFA…VLFY), 95-115 (VWTG…AMLW), 124-144 (FFGV…VGRL), 176-196 (SQLY…NWFI), 203-223 (GSVS…VEYV), and 230-250 (LGLF…MIIG). A 1,2-diacyl-sn-glycero-3-phospho-(1'-sn-glycerol) is bound at residue Arg-143.

Belongs to the Lgt family.

The protein resides in the cell inner membrane. The enzyme catalyses L-cysteinyl-[prolipoprotein] + a 1,2-diacyl-sn-glycero-3-phospho-(1'-sn-glycerol) = an S-1,2-diacyl-sn-glyceryl-L-cysteinyl-[prolipoprotein] + sn-glycerol 1-phosphate + H(+). The protein operates within protein modification; lipoprotein biosynthesis (diacylglyceryl transfer). Its function is as follows. Catalyzes the transfer of the diacylglyceryl group from phosphatidylglycerol to the sulfhydryl group of the N-terminal cysteine of a prolipoprotein, the first step in the formation of mature lipoproteins. The chain is Phosphatidylglycerol--prolipoprotein diacylglyceryl transferase from Vibrio vulnificus (strain CMCP6).